The following is a 1087-amino-acid chain: Exoglucanase XynX (1087 aa).

The N-terminal stretch at 1 to 30 is a signal peptide; it reads MKNNLSKFVSIFTAFIMIFGTSLFFPHVSA. The CBM-cenC domain occupies 37-188; sequence ANLVSNGDFE…YIDDVVVTPQ (152 aa). The GH10 domain occupies 204-527; it reads QNDIPDLSSV…KPAYWAIADP (324 aa). Residue Glu347 is the Proton donor of the active site. Residue Asp389 is part of the active site. The active-site Nucleophile is Glu452. SLH domains are found at residues 903-966, 967-1025, and 1028-1087; these read KKSV…YNGE, FSDV…KEEN, and ATSF…SNNL.

This sequence belongs to the glycosyl hydrolase 10 (cellulase F) family.

It carries out the reaction Hydrolysis of (1-&gt;4)-beta-D-glucosidic linkages in cellulose and cellotetraose, releasing cellobiose from the non-reducing ends of the chains.. This is Exoglucanase XynX (xynX) from Acetivibrio thermocellus (Hungateiclostridium thermocellum).